A 495-amino-acid polypeptide reads, in one-letter code: MRKYSPLMVQGTTSDAGKTVLVAGLCRLLANKGIQVAPFKPQNMALNSAVTEDGGEIGRAQALQADAARVKPHVHMNPILLKPNTDIGAQVIVQGKAIETMDAWGFHDYKKLAMPYVLESFSYLSNNYECVVIEGAGSPAEINLRENDIANMGFAEAADVPVIIVADIDRGGVFAHLYGTLALLSESEQARVKGFVINRFRGDISLLVPGLEWLEEKTGKPVLGVIPYLHGLNLEAEDAIKSEQLDKGKFIVKVPVVTRISNHTDFDPLRLHPEIDLQFIGKGDSLSGADFIILPGSKSVQADLEYIKSQGWDKDIERHLRYGGKVMGICGGYQMLGEHLADPLGIEGVPCRVKGLGYLSISTELQKQKQLTLVEGTLALPNQNAVKVKGYEIHAGVSTNLGKEHIPISIHTKDAMRYDGTINDENSIFGTYLHGVFDEPEAFEAILTWAGLEKCQAINMHDIQEEAIERIAKSMEDSLDLSLIWPDVFEKNKAY.

Residues 249–442 (KFIVKVPVVT…LHGVFDEPEA (194 aa)) form the GATase cobBQ-type domain. Cys330 acts as the Nucleophile in catalysis. The active site involves His434.

The protein belongs to the CobB/CobQ family. CobQ subfamily.

It participates in cofactor biosynthesis; adenosylcobalamin biosynthesis. Its function is as follows. Catalyzes amidations at positions B, D, E, and G on adenosylcobyrinic A,C-diamide. NH(2) groups are provided by glutamine, and one molecule of ATP is hydrogenolyzed for each amidation. This is Cobyric acid synthase from Aliivibrio fischeri (strain ATCC 700601 / ES114) (Vibrio fischeri).